A 327-amino-acid polypeptide reads, in one-letter code: Dolichyl-phosphate beta-glucosyltransferase ALG5D (327 aa).

Residues 1–6 lie on the Lumenal side of the membrane; it reads MEKQLA. The helical transmembrane segment at 7-27 threads the bilayer; that stretch reads ELSVYILIIFLILGFIMAILM. Topologically, residues 28–327 are cytoplasmic; sequence RFGDDTTLFD…NIWTIRDRKF (300 aa).

It belongs to the glycosyltransferase 2 family.

The protein resides in the endoplasmic reticulum membrane. The enzyme catalyses a di-trans,poly-cis-dolichyl phosphate + UDP-alpha-D-glucose = a di-trans,poly-cis-dolichyl beta-D-glucosyl phosphate + UDP. Its pathway is protein modification; protein glycosylation. Functionally, dolichyl-phosphate beta-glucosyltransferase involved in the glycosylation of glycoproteins through the synthesis of dolichyl beta-D-glucosyl phosphate which serves as a sugar donor for transfer of three glucose residues to the Man-9-GlcNAc-2-PP-dolichol precursor to N-glycans. This chain is Dolichyl-phosphate beta-glucosyltransferase ALG5D, found in Trichomonas vaginalis (strain ATCC PRA-98 / G3).